Reading from the N-terminus, the 604-residue chain is MSAKQLGDLKPLFIEWLKDEIDACGPRQEKMAMVYFRARESLKRFDQPITETAKVLKVKGIGNSIKNKLASKLAQYCQDNNIPLEDAAAPSHVVGISVTRVRTATQEKDDQSPKRKKRKYVPRKRSGAYAILLGALELGCPSRGLTKEEIIDAAAKYCDVSFVSNPLTREFYSAWTAIKVLIDHDLMLEQGRPRRYIVTEAGEQMAETLKHADSVIFPEDCPYQRRQQAPESTAEDHTELSASLSELVRQEHLPQNHSGMCFSFEPPSSAPSDYLDPGQKSANVASSPHRLRPPIGPSIDIVKARWNGTSYELWKPGSYDIELYIDHREVRAKSERDFFVNALLTRGVTVEGKALALGDMVWVARHRDSRSTCVLNFMLERKRLDDLAMSIRDNRFMEQKNRLKKTGCKHIFYLVEETSGTNVAGMEGAIKTSIWMTYVYSGFHVKRTRNADDTVEWLHDMTCTVQRYYCSKSLLVLRPREIANQEDYGSLLSAFRLQFERNNTSLECCHAFDCYQEVLGKTGLMTVKELYIRTLMLNRGVSLEKALAIQSKFPTLRSLMTAFRNCKSEEDGRRMLYLALLDQPASRRVGKALAATLWDTFGRR.

Residues serine 268–arginine 290 form a disordered region. Residues glutamate 322–serine 419 enclose the ERCC4 domain.

Belongs to the XPF family. Interacts with EME1. Mg(2+) serves as cofactor.

It is found in the nucleus. Its function is as follows. Interacts with EME1 to form a DNA structure-specific endonuclease with substrate preference for branched DNA structures with a 5'-end at the branch nick. Typical substrates include 3'-flap structures, D-loops, replication forks and nicked Holliday junctions. May be required in mitosis for the processing of stalled or collapsed replication fork intermediates. May be required in meiosis for the repair of meiosis-specific double strand breaks subsequent to single-end invasion (SEI). The protein is Crossover junction endonuclease MUS81 (MUS81) of Eremothecium gossypii (strain ATCC 10895 / CBS 109.51 / FGSC 9923 / NRRL Y-1056) (Yeast).